A 309-amino-acid polypeptide reads, in one-letter code: Methionyl-tRNA formyltransferase (309 aa).

109-112 is a binding site for (6S)-5,6,7,8-tetrahydrofolate; that stretch reads SLLP.

It belongs to the Fmt family.

It carries out the reaction L-methionyl-tRNA(fMet) + (6R)-10-formyltetrahydrofolate = N-formyl-L-methionyl-tRNA(fMet) + (6S)-5,6,7,8-tetrahydrofolate + H(+). Attaches a formyl group to the free amino group of methionyl-tRNA(fMet). The formyl group appears to play a dual role in the initiator identity of N-formylmethionyl-tRNA by promoting its recognition by IF2 and preventing the misappropriation of this tRNA by the elongation apparatus. This chain is Methionyl-tRNA formyltransferase, found in Clostridioides difficile (strain 630) (Peptoclostridium difficile).